The following is a 398-amino-acid chain: Acetyl-CoA acetyltransferase (398 aa).

Residue Ser2 is modified to N-acetylserine. Cys91 serves as the catalytic Acyl-thioester intermediate. Tyr186 and Lys231 together coordinate CoA. Residue Tyr186 coordinates K(+). K(+) is bound by residues Ala248, Ala249, and Ala251. Residue Ser252 participates in CoA binding. A K(+)-binding site is contributed by Val350. Catalysis depends on proton acceptor residues His354 and Cys384.

The protein belongs to the thiolase-like superfamily. Thiolase family. Homotetramer.

It localises to the cytoplasm. The enzyme catalyses 2 acetyl-CoA = acetoacetyl-CoA + CoA. Its pathway is metabolic intermediate biosynthesis; (R)-mevalonate biosynthesis; (R)-mevalonate from acetyl-CoA: step 1/3. In terms of biological role, acetyl-CoA acetyltransferase; part of the first module of ergosterol biosynthesis pathway that includes the early steps of the pathway, conserved across all eukaryotes, and which results in the formation of mevalonate from acetyl-coenzyme A (acetyl-CoA). In this module, the acetyl-CoA acetyltransferase ERG10 catalyzes the formation of acetoacetyl-CoA. The hydroxymethylglutaryl-CoA synthase ERG13 then condenses acetyl-CoA with acetoacetyl-CoA to form HMG-CoA. The rate-limiting step of the early module is the reduction to mevalonate by the 3-hydroxy-3-methylglutaryl-coenzyme A (HMG-CoA) reductases HMG1 and HMG2 which are derived from a single ancestral HMGR gene by gene duplication. This Saccharomyces pastorianus (strain ATCC 76670 / Carlsberg bottom yeast no.2 / CBS 1503 / CLIB 180 / NBRC 10610 / NRRL Y-1525) (Saaz-type lager yeast) protein is Acetyl-CoA acetyltransferase.